A 265-amino-acid polypeptide reads, in one-letter code: 4-hydroxy-tetrahydrodipicolinate reductase (265 aa).

NAD(+) contacts are provided by residues Gly-7–Met-12 and Asp-33. Arg-34 is an NADP(+) binding site. NAD(+) is bound by residues Gly-96–Thr-98 and Ala-120–Met-123. The Proton donor/acceptor role is filled by His-153. His-154 serves as a coordination point for (S)-2,3,4,5-tetrahydrodipicolinate. The Proton donor role is filled by Lys-157. Gly-163–Thr-164 is a binding site for (S)-2,3,4,5-tetrahydrodipicolinate.

This sequence belongs to the DapB family.

The protein resides in the cytoplasm. It catalyses the reaction (S)-2,3,4,5-tetrahydrodipicolinate + NAD(+) + H2O = (2S,4S)-4-hydroxy-2,3,4,5-tetrahydrodipicolinate + NADH + H(+). The enzyme catalyses (S)-2,3,4,5-tetrahydrodipicolinate + NADP(+) + H2O = (2S,4S)-4-hydroxy-2,3,4,5-tetrahydrodipicolinate + NADPH + H(+). Its pathway is amino-acid biosynthesis; L-lysine biosynthesis via DAP pathway; (S)-tetrahydrodipicolinate from L-aspartate: step 4/4. Functionally, catalyzes the conversion of 4-hydroxy-tetrahydrodipicolinate (HTPA) to tetrahydrodipicolinate. The polypeptide is 4-hydroxy-tetrahydrodipicolinate reductase (Burkholderia orbicola (strain MC0-3)).